The sequence spans 135 residues: Protein PsiE homolog (135 aa).

The next 4 membrane-spanning stretches (helical) occupy residues 14–34, 54–74, 82–102, and 107–127; these read LQTILNIGLLVLATILVIFLV, YQLIEGIVIYFLYFEFIALIV, HFPLRYFIYIGITAIIRLIIV, and PSDTLMYSAAILLLVVTLYLA.

The protein belongs to the PsiE family.

It is found in the cell inner membrane. This Pectobacterium carotovorum subsp. carotovorum (strain PC1) protein is Protein PsiE homolog.